The following is a 310-amino-acid chain: Uracil phosphoribosyltransferase homolog (310 aa).

Disordered regions lie at residues 1-27 and 62-89; these read MASE…PSPE and SERD…GNYD. A compositionally biased stretch (polar residues) spans 16–25; the sequence is RQVNSTSSPS. Phosphoserine is present on S25. GTP-binding positions include R134, R143, and 177-180; that span reads EKGN. 5-phospho-alpha-D-ribose 1-diphosphate is bound at residue R187. The GTP site is built by R204 and R233. Residue 239 to 247 coordinates 5-phospho-alpha-D-ribose 1-diphosphate; sequence YPILSTGNT. Residue 300–302 coordinates uracil; it reads THF.

This sequence belongs to the UPRTase family.

It localises to the cytoplasm. Its subcellular location is the nucleus. The sequence is that of Uracil phosphoribosyltransferase homolog (Uprt) from Mus musculus (Mouse).